A 423-amino-acid polypeptide reads, in one-letter code: MAATTTRPLPLLLLLLLPPLLLLLLSFHAAAAAAAEEFPRDGRVIELDESSFEAALGAIDYLFVDFYAPWCGHCKRLAPELDEAAPVLAGLSEPIIVAKVNADKYRKLGSKYGVDGFPTLMLFIHGVPIEYTGSRKADLLVRNLNKFVAPDVSILESDSAIKSFVENAGTSFPMFIGFGVNESLIAGYGGKYKKRAWFAVAKDFSEDFMVTYDFDKVPALVSLHPKYKEQSVFYGPFEGSFLEDFIRQSLLPLTVPINTETLKMLDDDDRKVVLAILEDDSDETSSQLVKVLRSAANANRDLVFGYVGIKQWDEFVETFDISKSSQLPKLIVWDRNEEYEVVEGSEKLEEGDQASQISQFLEGYRAGRTTKKKVSGPSFMGFLNSLVSLNSLYILICVFALLGVMIYFTGQDDTPQVRRAHEE.

Residues 1–35 (MAATTTRPLPLLLLLLLPPLLLLLLSFHAAAAAAA) form the signal peptide. A Thioredoxin domain is found at 36-149 (EEFPRDGRVI…LVRNLNKFVA (114 aa)). Active-site nucleophile residues include Cys-71 and Cys-74. A disulfide bond links Cys-71 and Cys-74. Asn-181 is a glycosylation site (N-linked (GlcNAc...) asparagine). A helical membrane pass occupies residues 386–406 (LVSLNSLYILICVFALLGVMI).

It belongs to the protein disulfide isomerase family.

Its subcellular location is the membrane. In terms of biological role, acts as a protein-folding catalyst that interacts with nascent polypeptides to catalyze the formation, isomerization, and reduction or oxidation of disulfide bonds. May play a role in storage protein biogenesis. This chain is Protein disulfide isomerase-like 5-2 (PDIL5-2), found in Oryza sativa subsp. japonica (Rice).